Consider the following 565-residue polypeptide: Polycomb protein EED (565 aa).

WD repeat units lie at residues 89–133 (DDGN…LYRT), 136–176 (GHGG…EKQP), 185–224 (GHSYDLLSVAFHDNGRYVLSAGHDQVINLWALPEFPNEHM), and 240–278 (IHNNLVDCVAFYGDLILSRACHEDTIVLWRIEGFSSDDP). The tract at residues 417–488 (VKKAPGAAGS…SASPDPDSPF (72 aa)) is disordered. Residues 429–450 (GTAANGGHNNNNNNNNNNNNNN) show a composition bias toward low complexity. Residues 451–468 (HETGSQRSFSATNNLSNS) show a composition bias toward polar residues. The WD 5 repeat unit spans residues 519–559 (IDGAFVGRQVGWSPEGEWCVVVGNGNRALIYQRWGKERGLG).

Belongs to the WD repeat ESC family. In terms of assembly, component of the polycomb repressive complex 2 (PRC2) that consists of four core subunits icluding EZH2, EED, SUZ12, and RBBP4, among which EZH2 is the catalytic subunit and which minimally requires EED and SUZ12 for catalysis.

The protein localises to the nucleus. Functionally, component of the of the Polycomb Repressive Complex 2 (PRC2), a histone H3 lysine methyltransferase responsible for generating mono-, di-, and tri-methylation on Lys27 (H3K27me1, H3K27me2 and H3K27me3). The tri-methylated form is known to be critical in gene repression, and its proper placement is essential in defining repression patterns during development. EED is not a catalytic subunit but is required for the complex regulation of histone H3 lysine methylation by EZH2. This is Polycomb protein EED from Chaetomium thermophilum (strain DSM 1495 / CBS 144.50 / IMI 039719) (Thermochaetoides thermophila).